The sequence spans 210 residues: Putative RING-H2 finger protein ATL50 (210 aa).

Residues 35 to 55 traverse the membrane as a helical segment; sequence IVLLYITLLSIIFFVAALIHL. Residues 122–164 form an RING-type; atypical zinc finger; sequence CAVCLREFTAEDELRLLPKCSHAFHVECIDTWLLTNSTCPLCR. The interval 187–210 is disordered; sequence SDGDNSQDSDSSFMLTDLDDVESK.

The protein belongs to the RING-type zinc finger family. ATL subfamily.

Its subcellular location is the membrane. It catalyses the reaction S-ubiquitinyl-[E2 ubiquitin-conjugating enzyme]-L-cysteine + [acceptor protein]-L-lysine = [E2 ubiquitin-conjugating enzyme]-L-cysteine + N(6)-ubiquitinyl-[acceptor protein]-L-lysine.. It participates in protein modification; protein ubiquitination. This Arabidopsis thaliana (Mouse-ear cress) protein is Putative RING-H2 finger protein ATL50 (ATL50).